The sequence spans 332 residues: D-galactose/methyl-galactoside binding periplasmic protein MglB (332 aa).

Residues 1 to 23 (MNKKVLTLSAVMASLLFGAHAHA) form the signal peptide. The beta-D-galactose site is built by aspartate 37 and asparagine 114. The beta-D-glucose site is built by aspartate 37 and asparagine 114. 5 residues coordinate Ca(2+): aspartate 157, asparagine 159, aspartate 161, lysine 163, and glutamine 165. The beta-D-galactose site is built by histidine 175, aspartate 177, and arginine 181. Residues histidine 175, aspartate 177, and arginine 181 each coordinate beta-D-glucose. Glutamate 228 contacts Ca(2+). Beta-D-galactose contacts are provided by asparagine 234, aspartate 259, and asparagine 279. Residues asparagine 234, aspartate 259, and asparagine 279 each coordinate beta-D-glucose.

It belongs to the bacterial solute-binding protein 2 family. As to quaternary structure, the ABC transporter complex is composed of one ATP-binding protein (MglA), two transmembrane proteins (MglC) and a solute-binding protein (MglB).

It is found in the periplasm. Part of the ABC transporter complex MglABC involved in galactose/methyl galactoside import. In addition, binds D-galactose and D-glucose and plays a role in the chemotaxis towards these two sugars by interacting with the Trg chemoreceptor. The protein is D-galactose/methyl-galactoside binding periplasmic protein MglB (mglB) of Salmonella typhimurium (strain LT2 / SGSC1412 / ATCC 700720).